The sequence spans 231 residues: Endonuclease NucS (231 aa).

Belongs to the NucS endonuclease family.

The protein localises to the cytoplasm. Cleaves both 3' and 5' ssDNA extremities of branched DNA structures. This is Endonuclease NucS from Beutenbergia cavernae (strain ATCC BAA-8 / DSM 12333 / CCUG 43141 / JCM 11478 / NBRC 16432 / NCIMB 13614 / HKI 0122).